The following is a 238-amino-acid chain: Ribonuclease PH (238 aa).

Residues Arg86 and 124–126 contribute to the phosphate site; that span reads GTR.

The protein belongs to the RNase PH family. In terms of assembly, homodimer. Has a tendency to aggregate into multimers. It depends on Mg(2+) as a cofactor.

The enzyme catalyses tRNA(n+1) + phosphate = tRNA(n) + a ribonucleoside 5'-diphosphate. In terms of biological role, phosphorolytic exoribonuclease that plays an important role in tRNA 3'-end maturation; has no activity on a tRNA precursor with a 3'-terminal phosphate group. In vitro is freely reversible, adds nucleotides to the ends of RNA molecules by using nucleoside diphosphates as substrates, but this may not be physiologically important. Probably plays a role in initiation of 16S rRNA degradation (leading to ribosome degradation) during starvation. In Escherichia coli (strain K12 / MC4100 / BW2952), this protein is Ribonuclease PH.